The following is a 367-amino-acid chain: Phosphoribosylaminoimidazole-succinocarboxamide synthase (367 aa).

This sequence belongs to the SAICAR synthetase family.

The catalysed reaction is 5-amino-1-(5-phospho-D-ribosyl)imidazole-4-carboxylate + L-aspartate + ATP = (2S)-2-[5-amino-1-(5-phospho-beta-D-ribosyl)imidazole-4-carboxamido]succinate + ADP + phosphate + 2 H(+). It functions in the pathway purine metabolism; IMP biosynthesis via de novo pathway; 5-amino-1-(5-phospho-D-ribosyl)imidazole-4-carboxamide from 5-amino-1-(5-phospho-D-ribosyl)imidazole-4-carboxylate: step 1/2. This is Phosphoribosylaminoimidazole-succinocarboxamide synthase from Aliivibrio salmonicida (strain LFI1238) (Vibrio salmonicida (strain LFI1238)).